The chain runs to 144 residues: Mediator of RNA polymerase II transcription subunit 21 (144 aa).

It belongs to the Mediator complex subunit 21 family. Interacts with PPARG. Component of the Mediator complex, which is composed of MED1, MED4, MED6, MED7, MED8, MED9, MED10, MED11, MED12, MED13, MED13L, MED14, MED15, MED16, MED17, MED18, MED19, MED20, MED21, MED22, MED23, MED24, MED25, MED26, MED27, MED29, MED30, MED31, CCNC, CDK8 and CDC2L6/CDK11. The MED12, MED13, CCNC and CDK8 subunits form a distinct module termed the CDK8 module. Mediator containing the CDK8 module is less active than Mediator lacking this module in supporting transcriptional activation. Individual preparations of the Mediator complex lacking one or more distinct subunits have been variously termed ARC, CRSP, DRIP, PC2, SMCC and TRAP. Interacts with THRA in a ligand-dependent fashion.

It is found in the nucleus. Component of the Mediator complex, a coactivator involved in the regulated transcription of nearly all RNA polymerase II-dependent genes. Mediator functions as a bridge to convey information from gene-specific regulatory proteins to the basal RNA polymerase II transcription machinery. Mediator is recruited to promoters by direct interactions with regulatory proteins and serves as a scaffold for the assembly of a functional preinitiation complex with RNA polymerase II and the general transcription factors. The protein is Mediator of RNA polymerase II transcription subunit 21 (MED21) of Homo sapiens (Human).